Consider the following 213-residue polypeptide: N-(5'-phosphoribosyl)anthranilate isomerase (213 aa).

This sequence belongs to the TrpF family.

The enzyme catalyses N-(5-phospho-beta-D-ribosyl)anthranilate = 1-(2-carboxyphenylamino)-1-deoxy-D-ribulose 5-phosphate. It functions in the pathway amino-acid biosynthesis; L-tryptophan biosynthesis; L-tryptophan from chorismate: step 3/5. This chain is N-(5'-phosphoribosyl)anthranilate isomerase, found in Methanocella arvoryzae (strain DSM 22066 / NBRC 105507 / MRE50).